The chain runs to 86 residues: Anti-adapter protein IraP (86 aa).

Residues 1-38 (MKNLIAELLVKLAQKEEEAKELTVQVEALEIVVTALLR) are a coiled coil.

It belongs to the IraP family. As to quaternary structure, interacts with RssB.

Its subcellular location is the cytoplasm. Functionally, inhibits RpoS proteolysis by regulating RssB activity, thereby increasing the stability of the sigma stress factor RpoS especially during phosphate starvation, but also in stationary phase and during nitrogen starvation. Its effect on RpoS stability is due to its interaction with RssB, which probably blocks the interaction of RssB with RpoS, and the consequent delivery of the RssB-RpoS complex to the ClpXP protein degradation pathway. This Klebsiella pneumoniae subsp. pneumoniae (strain ATCC 700721 / MGH 78578) protein is Anti-adapter protein IraP.